The primary structure comprises 1090 residues: Leucine--tRNA ligase, cytoplasmic (1090 aa).

An N-acetylserine modification is found at Ser-2. The short motif at 66-76 is the 'HIGH' region element; the sequence is PYMNGVMHAGH. The residue at position 142 (Thr-142) is a Phosphothreonine. Residues 729–733 carry the 'KMSKS' region motif; the sequence is KMSKS. Residue Lys-732 participates in ATP binding.

It belongs to the class-I aminoacyl-tRNA synthetase family.

It localises to the cytoplasm. It carries out the reaction tRNA(Leu) + L-leucine + ATP = L-leucyl-tRNA(Leu) + AMP + diphosphate. This is Leucine--tRNA ligase, cytoplasmic (CDC60) from Saccharomyces cerevisiae (strain ATCC 204508 / S288c) (Baker's yeast).